A 440-amino-acid chain; its full sequence is 26S proteasome regulatory subunit 4 (440 aa).

A compositionally biased stretch (gly residues) spans 1-13 (MGQSQSGGHGPGG). A disordered region spans residues 1–49 (MGQSQSGGHGPGGGKKDDKDKKKKYEPPVPTRVGKKKKKTKGPDAASKL). Residue Gly-2 is the site of N-myristoyl glycine attachment. Residue Ser-4 is modified to Phosphoserine. The segment covering 14–26 (GKKDDKDKKKKYE) has biased composition (basic and acidic residues). A Phosphothreonine modification is found at Thr-53. A disordered region spans residues 84 to 104 (QMKPLEEKQEEERSKVDDLRG). The segment covering 86–103 (KPLEEKQEEERSKVDDLR) has biased composition (basic and acidic residues). ATP is bound at residue 226 to 233 (GPPGTGKT). A Glycyl lysine isopeptide (Lys-Gly) (interchain with G-Cter in ubiquitin) cross-link involves residue Lys-237. Residue Lys-258 is modified to N6-acetyllysine. A Phosphothreonine modification is found at Thr-434. A Phosphotyrosine modification is found at Tyr-439.

The protein belongs to the AAA ATPase family. As to quaternary structure, component of the 19S proteasome regulatory particle complex. The 26S proteasome consists of a 20S core particle (CP) and two 19S regulatory subunits (RP). The regulatory particle is made of a lid composed of 9 subunits, a base containing 6 ATPases including PSMC1 and few additional components. Interacts with SCA7. Interacts with NGLY1. Interacts with PAAF1.

Its subcellular location is the cytoplasm. It localises to the nucleus. The protein localises to the membrane. Component of the 26S proteasome, a multiprotein complex involved in the ATP-dependent degradation of ubiquitinated proteins. This complex plays a key role in the maintenance of protein homeostasis by removing misfolded or damaged proteins, which could impair cellular functions, and by removing proteins whose functions are no longer required. Therefore, the proteasome participates in numerous cellular processes, including cell cycle progression, apoptosis, or DNA damage repair. PSMC1 belongs to the heterohexameric ring of AAA (ATPases associated with diverse cellular activities) proteins that unfolds ubiquitinated target proteins that are concurrently translocated into a proteolytic chamber and degraded into peptides. The sequence is that of 26S proteasome regulatory subunit 4 (PSMC1) from Homo sapiens (Human).